The following is a 162-amino-acid chain: Protein NrdI (162 aa).

The protein belongs to the NrdI family.

Its function is as follows. Probably involved in ribonucleotide reductase function. The sequence is that of Protein NrdI from Streptococcus pyogenes serotype M28 (strain MGAS6180).